A 174-amino-acid polypeptide reads, in one-letter code: ATP-dependent protease subunit HslV (174 aa).

Residue threonine 2 is part of the active site. Residues glycine 157, cysteine 160, and threonine 163 each contribute to the Na(+) site.

It belongs to the peptidase T1B family. HslV subfamily. As to quaternary structure, a double ring-shaped homohexamer of HslV is capped on each side by a ring-shaped HslU homohexamer. The assembly of the HslU/HslV complex is dependent on binding of ATP.

Its subcellular location is the cytoplasm. It catalyses the reaction ATP-dependent cleavage of peptide bonds with broad specificity.. Allosterically activated by HslU binding. Its function is as follows. Protease subunit of a proteasome-like degradation complex believed to be a general protein degrading machinery. The sequence is that of ATP-dependent protease subunit HslV from Yersinia pseudotuberculosis serotype I (strain IP32953).